A 937-amino-acid polypeptide reads, in one-letter code: Inactive tyrosine-protein kinase transmembrane receptor ROR1 (937 aa).

The N-terminal stretch at 1–29 (MHRPRRRGTRPPPLALLAALLLAARGADA) is a signal peptide. Residues 30–406 (QETELSVSAE…KEKNKMEILY (377 aa)) lie on the Extracellular side of the membrane. An Ig-like C2-type domain is found at 42-141 (PTSSWNTSSE…VATNGKKVVS (100 aa)). N-linked (GlcNAc...) asparagine glycosylation is found at Asn47 and Asn66. Intrachain disulfides connect Cys79–Cys131, Cys170–Cys235, Cys178–Cys228, Cys219–Cys260, Cys248–Cys296, Cys252–Cys282, Cys313–Cys391, Cys334–Cys374, and Cys362–Cys386. The FZ domain maps to 165 to 299 (EEDGFCQPYR…SPEAANCIRI (135 aa)). The N-linked (GlcNAc...) asparagine glycan is linked to Asn184. In terms of domain architecture, Kringle spans 312–391 (KCYNSTGVDY…KSDLCDIPAC (80 aa)). An N-linked (GlcNAc...) asparagine glycan is attached at Asn315. A helical membrane pass occupies residues 407–427 (ILVPSVAIPLAIAFLFFFICV). Over 428–937 (CRNNQKSSSP…HTESMISAEV (510 aa)) the chain is Cytoplasmic. Residues 473–746 (VRFMEELGEC…PRFKDIHVRL (274 aa)) form the Protein kinase domain. ATP contacts are provided by residues 479 to 487 (LGECTFGKI) and Lys506. Residue Tyr645 is modified to Phosphotyrosine; by autocatalysis. The span at 753 to 762 (SSHTSSTTPS) shows a compositional bias: low complexity. Disordered stretches follow at residues 753 to 778 (SSHTSSTTPSGGNATTQTTSLSASPV), 840 to 890 (GPPR…HMSI), and 916 to 937 (QSSLLGDSHIHGHTESMISAEV). The span at 763–778 (GGNATTQTTSLSASPV) shows a compositional bias: polar residues. Positions 854–864 (RSPSSASGSTS) are enriched in low complexity. Over residues 865 to 880 (TGHVASLPSSGSNQEA) the composition is skewed to polar residues.

It belongs to the protein kinase superfamily. Tyr protein kinase family. ROR subfamily. Interacts with ERBB2 and IGFBP5. In terms of tissue distribution, at postnatal P0, expressed in heart, lung, liver, kidney, spleen and inner ear.

The protein localises to the membrane. It localises to the cell projection. Its subcellular location is the axon. Functionally, has very low kinase activity in vitro and is unlikely to function as a tyrosine kinase in vivo. Receptor for ligand WNT5A which activate downstream NFkB signaling pathway and may result in the inhibition of WNT3A-mediated signaling. In inner ear, crucial for spiral ganglion neurons to innervate auditory hair cells. Via IGFBP5 ligand, forms a complex with ERBB2 to enhance CREB oncogenic signaling. This chain is Inactive tyrosine-protein kinase transmembrane receptor ROR1 (Ror1), found in Mus musculus (Mouse).